The chain runs to 61 residues: Large ribosomal subunit protein bL32 (61 aa).

It belongs to the bacterial ribosomal protein bL32 family.

The chain is Large ribosomal subunit protein bL32 from Hyphomonas neptunium (strain ATCC 15444).